We begin with the raw amino-acid sequence, 206 residues long: Thymidylate kinase (206 aa).

10 to 17 (GNDGSGKS) lines the ATP pocket.

This sequence belongs to the thymidylate kinase family.

It carries out the reaction dTMP + ATP = dTDP + ADP. Its function is as follows. Phosphorylation of dTMP to form dTDP in both de novo and salvage pathways of dTTP synthesis. The protein is Thymidylate kinase of Caldicellulosiruptor saccharolyticus (strain ATCC 43494 / DSM 8903 / Tp8T 6331).